The following is a 290-amino-acid chain: 4-hydroxybenzoate octaprenyltransferase (290 aa).

8 helical membrane passes run 23–43 (IGAL…TPGV), 46–66 (LWIM…GCVV), 99–119 (LFVV…TMTI), 141–161 (LPQV…FAAV), 163–183 (ESVP…AVAY), 213–233 (LIIG…GELN), 234–254 (GLGW…VYQQ), and 268–288 (AFMN…MSYW).

Belongs to the UbiA prenyltransferase family. The cofactor is Mg(2+).

It is found in the cell inner membrane. It carries out the reaction all-trans-octaprenyl diphosphate + 4-hydroxybenzoate = 4-hydroxy-3-(all-trans-octaprenyl)benzoate + diphosphate. The protein operates within cofactor biosynthesis; ubiquinone biosynthesis. Catalyzes the prenylation of para-hydroxybenzoate (PHB) with an all-trans polyprenyl group. Mediates the second step in the final reaction sequence of ubiquinone-8 (UQ-8) biosynthesis, which is the condensation of the polyisoprenoid side chain with PHB, generating the first membrane-bound Q intermediate 3-octaprenyl-4-hydroxybenzoate. The polypeptide is 4-hydroxybenzoate octaprenyltransferase (Shigella flexneri).